Consider the following 66-residue polypeptide: Sodium channel alpha-toxin Acra8 (66 aa).

An LCN-type CS-alpha/beta domain is found at 2–64; it reads RDGYIVDDKN…VPIKEKGRCN (63 aa). Intrachain disulfides connect Cys-12–Cys-63, Cys-16–Cys-36, Cys-22–Cys-46, and Cys-26–Cys-48. Asparagine amide is present on Asn-64. Positions 65–66 are excised as a propeptide; the sequence is GR.

This sequence belongs to the long (4 C-C) scorpion toxin superfamily. Sodium channel inhibitor family. Alpha subfamily. In terms of tissue distribution, expressed by the venom gland.

It localises to the secreted. In terms of biological role, alpha toxins bind voltage-independently at site-3 of sodium channels (Nav) and inhibit the inactivation of the activated channels, thereby blocking neuronal transmission. The polypeptide is Sodium channel alpha-toxin Acra8 (Androctonus crassicauda (Arabian fat-tailed scorpion)).